The sequence spans 360 residues: MGPQTGKRLLVMAGGTGGHVFPALAVARRLASEGWQIRWLGTADRMEARLVPQHGFDIDFIDIQGVRGNGLLRKLAAPFKVLRSVMQARKVIREFKPDVVLGMGGFASGPGGVAAKLCGIPLVLHEQNAIPGMTNKLLSRIATRVLCAFEGAFGSLGTTVGNPIREELVALGAKPRESRTEALKVLVVGGSLGAKVFNDLMPSVTARIAQLQPVTVWHQTGKNNLSTVQAEYQLQGQDGGVKIAEFIDDMEAAYRWADVVLCRAGALTVSELAAVGLPSILVPYPHAVDDHQTMNARVLVDAGAAFLVPQPIATTELLADKLQLLAGDRDELTRMGERARAAAVLDATERVAEVCRELAK.

UDP-N-acetyl-alpha-D-glucosamine-binding positions include 16-18, N128, R165, S191, I247, 266-271, and Q292; these read TGG and ALTVSE.

Belongs to the glycosyltransferase 28 family. MurG subfamily.

The protein localises to the cell inner membrane. The enzyme catalyses di-trans,octa-cis-undecaprenyl diphospho-N-acetyl-alpha-D-muramoyl-L-alanyl-D-glutamyl-meso-2,6-diaminopimeloyl-D-alanyl-D-alanine + UDP-N-acetyl-alpha-D-glucosamine = di-trans,octa-cis-undecaprenyl diphospho-[N-acetyl-alpha-D-glucosaminyl-(1-&gt;4)]-N-acetyl-alpha-D-muramoyl-L-alanyl-D-glutamyl-meso-2,6-diaminopimeloyl-D-alanyl-D-alanine + UDP + H(+). The protein operates within cell wall biogenesis; peptidoglycan biosynthesis. Cell wall formation. Catalyzes the transfer of a GlcNAc subunit on undecaprenyl-pyrophosphoryl-MurNAc-pentapeptide (lipid intermediate I) to form undecaprenyl-pyrophosphoryl-MurNAc-(pentapeptide)GlcNAc (lipid intermediate II). The chain is UDP-N-acetylglucosamine--N-acetylmuramyl-(pentapeptide) pyrophosphoryl-undecaprenol N-acetylglucosamine transferase from Shewanella amazonensis (strain ATCC BAA-1098 / SB2B).